The primary structure comprises 325 residues: Hexaprenyl-diphosphate synthase large subunit ((2E,6E)-farnesyl-diphosphate specific) (325 aa).

Residues lysine 45, arginine 48, and histidine 77 each contribute to the isopentenyl diphosphate site. Positions 84, 88, and 93 each coordinate all-trans-hexaprenyl diphosphate. Mg(2+) contacts are provided by aspartate 84 and aspartate 88. Arginine 94 contributes to the isopentenyl diphosphate binding site. All-trans-hexaprenyl diphosphate is bound by residues lysine 170, threonine 171, and glutamine 208.

This sequence belongs to the FPP/GGPP synthase family. Dimer of heterodimer or heterotetramer composed of a small (Hexs-a) and large (Hexs-B) subunit. It depends on Mg(2+) as a cofactor.

It catalyses the reaction 3 isopentenyl diphosphate + (2E,6E)-farnesyl diphosphate = all-trans-hexaprenyl diphosphate + 3 diphosphate. Its function is as follows. Catalyzes the condensation of three molecules of isopentenyl diphosphate with farnesyl diphosphate (FPP) to yield (all-E)-hexaprenyl diphosphate (HexPP; C30), the precursor of the prenyl side chain of menaquinone-6. Large subunit Hexs-B catalyzes the condensation reaction and the final product chain length is cooperatively regulated by both the Hexs-A and Hexs-B subunits using the whole size of the hydrophobic cleft as a ruler. In Micrococcus luteus (Micrococcus lysodeikticus), this protein is Hexaprenyl-diphosphate synthase large subunit ((2E,6E)-farnesyl-diphosphate specific) (hexs-b).